Reading from the N-terminus, the 740-residue chain is Ribulose bisphosphate carboxylase, chloroplastic (740 aa).

Residues 1–55 (MPSSSFTTGLALGAGALVGANAFVAPTAKTTNLRAPTQEASLQVAASQQTEQPAP) constitute a chloroplast transit peptide. The chain crosses the membrane as a helical span at residues 56-76 (STSALPWAFGAGACLALAAGG). Residue asparagine 213 coordinates substrate. Catalysis depends on lysine 268, which acts as the Proton acceptor. Residue lysine 270 coordinates substrate. 3 residues coordinate Mg(2+): lysine 293, aspartate 295, and glutamate 296. Lysine 293 is subject to N6-carboxylysine. The active-site Proton acceptor is the histidine 389. Substrate-binding residues include arginine 390, histidine 423, and serine 470.

The protein belongs to the RuBisCO large chain family. Type II subfamily. In terms of assembly, homodimer. Mg(2+) is required as a cofactor.

It is found in the plastid. Its subcellular location is the chloroplast membrane. The catalysed reaction is 2 (2R)-3-phosphoglycerate + 2 H(+) = D-ribulose 1,5-bisphosphate + CO2 + H2O. It carries out the reaction D-ribulose 1,5-bisphosphate + O2 = 2-phosphoglycolate + (2R)-3-phosphoglycerate + 2 H(+). Its function is as follows. RuBisCO catalyzes two reactions: the carboxylation of D-ribulose 1,5-bisphosphate, the primary event in carbon dioxide fixation, as well as the oxidative fragmentation of the pentose substrate. Both reactions occur simultaneously and in competition at the same active site. In Heterocapsa triquetra (Dinoflagellate), this protein is Ribulose bisphosphate carboxylase, chloroplastic (rbcL).